The chain runs to 84 residues: Large ribosomal subunit protein bL27 (84 aa).

The segment at 1–20 is disordered; the sequence is MAHKKAGGSTRNGRDSNPKY.

This sequence belongs to the bacterial ribosomal protein bL27 family.

This chain is Large ribosomal subunit protein bL27, found in Francisella philomiragia subsp. philomiragia (strain ATCC 25017 / CCUG 19701 / FSC 153 / O#319-036).